The chain runs to 350 residues: Inhibitor of nuclear factor kappa-B kinase-interacting protein (350 aa).

Residues 1 to 11 are compositionally biased toward basic residues; sequence MSEVKSRKKSG. The disordered stretch occupies residues 1-39; it reads MSEVKSRKKSGPKGAPAAEPGKRSEGGKTPVARSSGGGG. A helical transmembrane segment spans residues 46–62; it reads CLSLLSLGTCLGLAWFV. N-linked (GlcNAc...) asparagine glycosylation occurs at asparagine 144. Positions 184–217 form a coiled coil; it reads GLVTDVISLTDSVQELENKIEKVEKNTVKNIGDL. N-linked (GlcNAc...) asparagine glycosylation occurs at asparagine 328.

In terms of processing, N-glycosylated. Isoform 4 is glycosylated at Asn-154. Expressed in vein endothelial cells. Isoform 4 is expressed in lung, kidney, spleen, thymus and skeletal muscle.

It is found in the endoplasmic reticulum membrane. Target of p53/TP53 with pro-apoptotic function. The sequence is that of Inhibitor of nuclear factor kappa-B kinase-interacting protein (IKBIP) from Homo sapiens (Human).